The following is a 213-amino-acid chain: RNA polymerase I subunit H (213 aa).

The span at 1 to 19 (MVERMKKDTGDETKTKVQE) shows a compositional bias: basic and acidic residues. The interval 1–70 (MVERMKKDTG…AREFTDKPWR (70 aa)) is disordered. The segment covering 21–31 (PPSPSPPPPPP) has biased composition (pro residues). Basic and acidic residues-rich tracts occupy residues 43 to 53 (VPEREKKQIER) and 60 to 69 (HAREFTDKPW).

In terms of tissue distribution, expressed during spermatogenesis, initially at pachytene stage with abundance increasing in round spermatids and decreasing again during spermatid elongation.

Its function is as follows. May be involved in male sterility. The chain is RNA polymerase I subunit H from Mus musculus (Mouse).